The primary structure comprises 349 residues: N-acetyltaurine hydrolase (349 aa).

Residues His-26, His-28, Glu-169, His-201, His-230, and Asp-298 each coordinate a divalent metal cation.

This sequence belongs to the metallo-dependent hydrolases superfamily. Phosphotriesterase family. The cofactor is a divalent metal cation.

It localises to the cytoplasm. Its subcellular location is the cytosol. It carries out the reaction N-acetyltaurine + H2O = taurine + acetate. It catalyses the reaction N-propanoyltaurine + H2O = propanoate + taurine. The catalysed reaction is N-acetyl-L-methionine + H2O = L-methionine + acetate. The enzyme catalyses N-acetyl-L-isoleucine + H2O = L-isoleucine + acetate. It carries out the reaction N-acetyl-L-leucine + H2O = L-leucine + acetate. It catalyses the reaction N-acetyl-L-valine + H2O = L-valine + acetate. Functionally, N-acetyltaurine hydrolase that catalyzes the hydrolysis of N-acetyltaurine into taurine and acetate. PTER also acts on other N-acetyl amino acids (Met, Ile, Leu, Val) and N-propionyltaurine, but at lower rates. This chain is N-acetyltaurine hydrolase (pter), found in Tetraodon nigroviridis (Spotted green pufferfish).